Reading from the N-terminus, the 1363-residue chain is DNA-directed RNA polymerase subunit beta (1363 aa).

Belongs to the RNA polymerase beta chain family. As to quaternary structure, the RNAP catalytic core consists of 2 alpha, 1 beta, 1 beta' and 1 omega subunit. When a sigma factor is associated with the core the holoenzyme is formed, which can initiate transcription.

The catalysed reaction is RNA(n) + a ribonucleoside 5'-triphosphate = RNA(n+1) + diphosphate. DNA-dependent RNA polymerase catalyzes the transcription of DNA into RNA using the four ribonucleoside triphosphates as substrates. In Neorickettsia risticii (Ehrlichia risticii), this protein is DNA-directed RNA polymerase subunit beta.